Here is an 881-residue protein sequence, read N- to C-terminus: MKKMSSGEIRQMFLDFFKSKGHAVEPSASLIPVDDPTLLWINSGVATLKKYFDGSVVPDNPRITNAQKSIRTNDIENVGKTARHLTFFEMLGNFSVGDYFKKEVIPWAWELLTSPKWFGFDPKRLYVTVYPKDKVTKELWQKTGVPDDHIVEAEDNFWDIGEGPSGPDSEIFYDRGQQFNNVAEDDPENYPGGENSRYVEIWNIVFSELNHLPDGRFVEQPHKNIDTGMGLERLVAVIQGTPTIFETDLFMPIIKATEKMSAGKRYGVSAQDDVSFKIIADHARTVTFAIGDGALPSNEGRGYVLRRLIRRAVLNGKKLGIDHDFLYQLVPVVGEIMKSYYPQILANQQFIQKVIESEEARFRQTLDAGVTLLNQIIADLKQDGKKEIPGADAFKLFDTYGFPVEMTNEYAQDEGLQVDMAGFKKNMAAQRDRARKARGDRQSMGSQDKVLMSITTPSKFTGWTELDHKHASLQTIVVNDQLQDSVSEGTAQLIFDETPFYAEMGGQVADHGEIKAQDGTVLADVSDVQHAPNGQNLHTVTVKGKLETGQQYWLSVDPLRRKKVSLNHTATHLLDQALRDVLGEHTHQAGSLVEPDYLRFDFTNFGQVTPKQLRQVETIVNQKIWDALPITWKEMPIEEAKKLGAIAMFGDKYGSVVRIVKIGDYNTEFDGGTHPTNSNALGLFKITSESGIGAGIRRVEAVTSKEAYEYLTQQQDWLSETAENLKIDQVKNVPSKVTQLQADLKAEQKTVAGLQAKLAAQAAAGIFDHPEEVGGLKLIAKQVQVAGMNELRQLADKWKAKQASDILVLGTEVSGKANLLVAVNDTANQAGFKAGDLIKAIAPKVGGGGGGRPDMAQAGGKNPAGIPAALSEAKTVISQKA.

Belongs to the class-II aminoacyl-tRNA synthetase family.

The protein localises to the cytoplasm. The enzyme catalyses tRNA(Ala) + L-alanine + ATP = L-alanyl-tRNA(Ala) + AMP + diphosphate. Functionally, catalyzes the attachment of alanine to tRNA(Ala) in a two-step reaction: alanine is first activated by ATP to form Ala-AMP and then transferred to the acceptor end of tRNA(Ala). Also edits incorrectly charged Ser-tRNA(Ala) and Gly-tRNA(Ala) via its editing domain. The polypeptide is Alanine--tRNA ligase (alaS) (Lacticaseibacillus paracasei (strain ATCC 334 / BCRC 17002 / CCUG 31169 / CIP 107868 / KCTC 3260 / NRRL B-441) (Lactobacillus paracasei)).